A 138-amino-acid polypeptide reads, in one-letter code: Iron sulfur cluster assembly protein 1 (138 aa).

This sequence belongs to the NifU family. In terms of assembly, component of the core Fe-S cluster (ISC) assembly machinery. Requires [2Fe-2S] cluster as cofactor.

It is found in the cytoplasm. Its pathway is cofactor biosynthesis; iron-sulfur cluster biosynthesis. In terms of biological role, scaffold protein for the de novo synthesis of iron-sulfur (Fe-S) clusters within mitosomes, which is required for maturation of both [2Fe-2S] and [4Fe-4S] proteins. First, a [2Fe-2S] cluster is transiently assembled on the scaffold protein ISU1. In a second step, the cluster is released from ISU1, transferred to a glutaredoxin, followed by the formation of [2Fe-2S] proteins, the synthesis of [4Fe-4S] clusters and their target-specific insertion into the recipient apoproteins. Cluster assembly on ISU1 depends on the function of the cysteine desulfurase complex NFS1-ISD11, which serves as the sulfur donor for cluster synthesis, the iron-binding protein frataxin as the putative iron donor, and the electron transfer chain comprised of ferredoxin reductase and ferredoxin, which receive their electrons from NADH. The chain is Iron sulfur cluster assembly protein 1 (ISU1) from Trachipleistophora hominis (Microsporidian parasite).